The sequence spans 160 residues: Conopressin/conophysin, isoform 2 (160 aa).

The first 30 residues, 1 to 30 (MKCSVLQMSRLSWAMCLMLLMLLLLGTAQG), serve as a signal peptide directing secretion. Cys31 and Cys36 form a disulfide bridge. A Glycine amide modification is found at Gly39. Residues 40-47 (GKRAVDAL) constitute a propeptide that is removed on maturation. Cystine bridges form between Cys53/Cys97, Cys56/Cys70, Cys64/Cys87, Cys71/Cys77, Cys104/Cys118, Cys112/Cys130, and Cys119/Cys124.

The protein belongs to the vasopressin/oxytocin family. In terms of tissue distribution, expressed by the venom gland.

The protein localises to the secreted. Targets vasopressin-oxytocin related receptors. The chain is Conopressin/conophysin, isoform 2 from Conus monile (Necklace cone).